Reading from the N-terminus, the 31-residue chain is Cytochrome b6-f complex subunit 6 (31 aa).

A helical transmembrane segment spans residues 7 to 25 (YSGFLLAAPIPASAPFTGL).

It belongs to the PetL family. In terms of assembly, the 4 large subunits of the cytochrome b6-f complex are cytochrome b6, subunit IV (17 kDa polypeptide, PetD), cytochrome f and the Rieske protein, while the 4 small subunits are PetG, PetL, PetM and PetN. The complex functions as a dimer.

It is found in the plastid. The protein localises to the chloroplast thylakoid membrane. In terms of biological role, component of the cytochrome b6-f complex, which mediates electron transfer between photosystem II (PSII) and photosystem I (PSI), cyclic electron flow around PSI, and state transitions. PetL is important for photoautotrophic growth as well as for electron transfer efficiency and stability of the cytochrome b6-f complex. The chain is Cytochrome b6-f complex subunit 6 from Huperzia lucidula (Shining clubmoss).